We begin with the raw amino-acid sequence, 550 residues long: CTP synthase (550 aa).

The tract at residues 1–277 (MNGSADAGPR…GRAVERALGL (277 aa)) is amidoligase domain. Ser-23 lines the CTP pocket. Residue Ser-23 coordinates UTP. Residue 24 to 29 (SLGKGI) coordinates ATP. Tyr-64 is an L-glutamine binding site. Asp-81 serves as a coordination point for ATP. Mg(2+) contacts are provided by Asp-81 and Glu-151. Residues 158–160 (DIE), 198–203 (KTKPTQ), and Lys-234 each bind CTP. UTP is bound by residues 198-203 (KTKPTQ) and Lys-234. Val-252 serves as a coordination point for ATP. The Glutamine amidotransferase type-1 domain maps to 302 to 549 (KIAIAGKYVK…VEAALAYQER (248 aa)). Position 364 (Gly-364) interacts with L-glutamine. The active-site Nucleophile; for glutamine hydrolysis is Cys-391. Residues 392–395 (LGLQ), Glu-415, and Arg-472 each bind L-glutamine. Catalysis depends on residues His-522 and Glu-524.

Belongs to the CTP synthase family. As to quaternary structure, homotetramer in the presence of UTP and ATP. Is in a protein concentration-dependent equilibrium between monomer, dimer, and tetramer in the absence of UTP and ATP.

It catalyses the reaction UTP + L-glutamine + ATP + H2O = CTP + L-glutamate + ADP + phosphate + 2 H(+). The enzyme catalyses L-glutamine + H2O = L-glutamate + NH4(+). The catalysed reaction is UTP + NH4(+) + ATP = CTP + ADP + phosphate + 2 H(+). It participates in pyrimidine metabolism; CTP biosynthesis via de novo pathway; CTP from UDP: step 2/2. Allosterically activated by GTP, when glutamine is the substrate. GTP has no effect on the reaction when ammonia is the substrate. The allosteric effector GTP functions by stabilizing the protein conformation that binds the tetrahedral intermediate(s) formed during glutamine hydrolysis. Inhibited by the product CTP, via allosteric rather than competitive inhibition. Functionally, catalyzes the ATP-dependent amination of UTP to CTP with either L-glutamine or ammonia as the source of nitrogen. Regulates intracellular CTP levels through interactions with the four ribonucleotide triphosphates. This Thermus thermophilus (strain ATCC 27634 / DSM 579 / HB8) protein is CTP synthase.